The following is a 122-amino-acid chain: Probable F-box protein At4g23960 (122 aa).

Residues 1–45 enclose the F-box domain; the sequence is MIEQLFPEVTCYALRYLDYSSLCQLSMTSSSMRKTANDDVLWRAL.

The sequence is that of Probable F-box protein At4g23960 from Arabidopsis thaliana (Mouse-ear cress).